A 293-amino-acid chain; its full sequence is Ribosomal protein L11 methyltransferase (293 aa).

4 residues coordinate S-adenosyl-L-methionine: threonine 145, glycine 166, aspartate 188, and asparagine 230.

Belongs to the methyltransferase superfamily. PrmA family.

It localises to the cytoplasm. The enzyme catalyses L-lysyl-[protein] + 3 S-adenosyl-L-methionine = N(6),N(6),N(6)-trimethyl-L-lysyl-[protein] + 3 S-adenosyl-L-homocysteine + 3 H(+). In terms of biological role, methylates ribosomal protein L11. This is Ribosomal protein L11 methyltransferase from Shewanella baltica (strain OS223).